A 70-amino-acid polypeptide reads, in one-letter code: U2-agatoxin-Ao1q (70 aa).

An N-terminal signal peptide occupies residues 1–20; it reads MRSIISLLLISAMVFSMIAA. Residues 21–34 constitute a propeptide that is removed on maturation; the sequence is VPEEEGLQLSEDER. Intrachain disulfides connect cysteine 44-cysteine 58 and cysteine 52-cysteine 68. At leucine 69 the chain carries Leucine amide.

This sequence belongs to the neurotoxin 01 (U2-agtx) family. Post-translationally, does not contain a cysteine at position 53 which disrupts the cysteine framework. As to expression, expressed by the venom gland.

The protein localises to the secreted. Insect active toxin causing rapid but reversible paralysis in crickets. No activity shown in mammals. Does not show effect on mammalian voltage-gated calcium channels. This is U2-agatoxin-Ao1q from Agelena orientalis (Funnel-web spider).